We begin with the raw amino-acid sequence, 523 residues long: Putative pentatricopeptide repeat-containing protein At3g15200 (523 aa).

10 PPR repeats span residues 142-172, 177-211, 212-242, 246-280, 281-315, 316-350, 351-385, 388-418, 420-454, and 455-489; these read SSML…MSKR, NEKT…GIDD, DLVA…RRRE, DIKA…KCRP, DVVS…RRNP, DVKI…GPDP, NVVT…GGSC, NDVT…NKCE, TSDL…GLGP, and DQRT…GMVP. The interval 497 to 523 is disordered; the sequence is LNQNKTKPRVEDKMLRSNLTSEESESD.

The protein belongs to the PPR family. P subfamily.

The sequence is that of Putative pentatricopeptide repeat-containing protein At3g15200 from Arabidopsis thaliana (Mouse-ear cress).